Consider the following 180-residue polypeptide: Ubiquitin-conjugating enzyme E2 20 (180 aa).

Residues 1–33 (MAAVNGYQGNTPADPPASNGSKQPAAPTKTVDS) form a disordered region. One can recognise a UBC core domain in the interval 35–180 (SVLKRLQSEL…VEKLYKPPSA (146 aa)). The active-site Glycyl thioester intermediate is the Cys-119.

This sequence belongs to the ubiquitin-conjugating enzyme family. In terms of tissue distribution, expressed in all tissues with cell division activities and in mature leaves.

It catalyses the reaction S-ubiquitinyl-[E1 ubiquitin-activating enzyme]-L-cysteine + [E2 ubiquitin-conjugating enzyme]-L-cysteine = [E1 ubiquitin-activating enzyme]-L-cysteine + S-ubiquitinyl-[E2 ubiquitin-conjugating enzyme]-L-cysteine.. Its pathway is protein modification; protein ubiquitination. Accepts the ubiquitin from the E1 complex and catalyzes its covalent attachment to other proteins. This Arabidopsis thaliana (Mouse-ear cress) protein is Ubiquitin-conjugating enzyme E2 20 (UBC20).